Here is a 69-residue protein sequence, read N- to C-terminus: DNA gyrase inhibitor YacG (69 aa).

Positions 7, 10, 26, and 30 each coordinate Zn(2+).

The protein belongs to the DNA gyrase inhibitor YacG family. As to quaternary structure, interacts with GyrB. Requires Zn(2+) as cofactor.

In terms of biological role, inhibits all the catalytic activities of DNA gyrase by preventing its interaction with DNA. Acts by binding directly to the C-terminal domain of GyrB, which probably disrupts DNA binding by the gyrase. The sequence is that of DNA gyrase inhibitor YacG from Shewanella sp. (strain ANA-3).